Reading from the N-terminus, the 148-residue chain is uncharacterized protein (148 aa).

To A.tumefaciens Atu0565/AGR_C_992.

This is an uncharacterized protein from Rhizobium meliloti (strain 1021) (Ensifer meliloti).